Reading from the N-terminus, the 343-residue chain is N-malonyltransferase FDB2 (343 aa).

Cys-107 serves as the catalytic Acyl-thioester intermediate. The Proton acceptor role is filled by His-155. Asp-170 is an active-site residue.

This sequence belongs to the arylamine N-acetyltransferase family.

Its pathway is xenobiotic degradation. N-malonyltransferase; part of the Fusarium detoxification of benzoxazolinone cluster involved in the degradation of benzoxazolinones produced by the host plant. Maize, wheat, and rye produce the 2 benzoxazinone phytoanticipins 2,4-dihy-droxy-7-methoxy-1,4-benzoxazin-3-one (DIMBOA) and 2,4-dihydroxy-1,4-benzoxazin-3-one (DIBOA) that, due to their inherent instability once released, spontaneously degrade to the more stable corresponding benzoxazolinones, 6-methoxy-2-benzoxazolinone (MBOA) and 2-benzoxazolinone (BOA), respectively. The first step in the detoxification of benzoxazolinones involves the hydrolysis of the cyclic ester bond of benzoxazolinones by the gamma-lactamase FDB1 to aminophenols. FDB1 is able to convert BOA into 2-aminophenol (2-AP), as well as MBOA into 5-methoxy-2-aminophenol (2-AMP). The N-malonyltransferase FDB2 then metabolizes aminophenols via N-malonylation to non-toxic malonamic acids. FDB2 converts 2-AP into N-(2-hydroxyphenyl) malonamic acid (HPMA) and 2-AMP into N-(2-hydroxy-4-methoxyphenyl) malonamic acid (HMPMA). The cluster also contains 2 transcription factors (FDB3 and FPSE_08121), an aldo-keto reductase (FPSE_08125) that possibly associates with a ketone component of BOA and MBOA degradation, an esterase (FPSE_08126), an acyl-CoA transferase (FPSE_08120), a solute carrier protein (FPSE_08119) and a transmembrane transporter (FPSE_08127) proposed to shuttle metabolites of benzoxazolinone degradation. In Fusarium pseudograminearum (strain CS3096) (Wheat and barley crown-rot fungus), this protein is N-malonyltransferase FDB2.